A 693-amino-acid polypeptide reads, in one-letter code: Pentatricopeptide repeat-containing protein At2g19280 (693 aa).

PPR repeat units lie at residues 200–234, 235–269, 270–304, 305–339, 340–370, 372–406, 407–441, 442–476, 477–511, 512–546, 547–581, 582–616, and 617–651; these read LETVFSILIDCCIRERKVNMALKLTYKVDQFGIFP, SRGVCISLLKEILRVHGLELAREFVEHMLSRGRHL, NAAVLSLFIRKYCSDGYFDKGWELLMGMKHYGIRP, DIVAFTVFIDKLCKAGFLKEATSVLFKLKLFGISQ, DSVSVSSVIDGFCKVGKPEEAIKLIHSFRLR, NIFVYSSFLSNICSTGDMLRASTIFQEIFELGLLP, DCVCYTTMIDGYCNLGRTDKAFQYFGALLKSGNPP, SLTTSTILIGACSRFGSISDAESVFRNMKTEGLKL, DVVTYNNLMHGYGKTHQLNKVFELIDEMRSAGISP, DVATYNILIHSMVVRGYIDEANEIISELIRRGFVP, STLAFTDVIGGFSKRGDFQEAFILWFYMADLRMKP, DVVTCSALLHGYCKAQRMEKAIVLFNKLLDAGLKP, and DVVLYNTLIHGYCSVGDIEKACELIGLMVQRGMLP.

It belongs to the PPR family. P subfamily.

The sequence is that of Pentatricopeptide repeat-containing protein At2g19280 from Arabidopsis thaliana (Mouse-ear cress).